A 507-amino-acid polypeptide reads, in one-letter code: ATP synthase subunit alpha, chloroplastic (507 aa).

ATP is bound at residue 170–177 (GDRQTGKT). The residue at position 257 (Thr-257) is a Phosphothreonine.

It belongs to the ATPase alpha/beta chains family. As to quaternary structure, F-type ATPases have 2 components, CF(1) - the catalytic core - and CF(0) - the membrane proton channel. CF(1) has five subunits: alpha(3), beta(3), gamma(1), delta(1), epsilon(1). CF(0) has four main subunits: a, b, b' and c.

The protein localises to the plastid. The protein resides in the chloroplast thylakoid membrane. The enzyme catalyses ATP + H2O + 4 H(+)(in) = ADP + phosphate + 5 H(+)(out). Produces ATP from ADP in the presence of a proton gradient across the membrane. The alpha chain is a regulatory subunit. The chain is ATP synthase subunit alpha, chloroplastic from Aethionema cordifolium (Lebanon stonecress).